The chain runs to 407 residues: MYLGEDCGAVYVRENGELRCVSAVKTVDPPPQNRLFTRDFTFQLCIDTLPSASRAERRDHFIFTYNKQGSLRYSVKTLFDISLQFIADHVEHVDSLVGFPEQMADKLFSAAEERGKFAELRTASRALQLFCEAYGELVLKSLCLRNRYLLISERLEEIRQFQSLECLDLYGCRLGDNHELFKYITSEALSSLVKLFMGANCLSDAGLQRLTAPVRVMKKGLENLQLLDLSENHITEKGLRYLTCFKTLQKLDLSGTKVMMDVSLKGFFRMMGMALSETPLMDFTHTACKTEGWAEQVINQWEITAAEVPKKDPKPRTNALRFYGREKFVREMLNSWSETSDATNKDKAVPIHFCKVDDCVQSSPSGETHSTHKSRKRRLSTEEEQSAAPVAKRLPLSVEDLHLLNSY.

LRR repeat units lie at residues 138-159 (VLKS…EEIR), 163-184 (SLEC…FKYI), 191-211 (SLVK…QRLT), 223-243 (NLQL…RYLT), and 247-268 (TLQK…KGFF). A disordered region spans residues 360 to 389 (VQSSPSGETHSTHKSRKRRLSTEEEQSAAP).

The protein belongs to the LRRC42 family.

The sequence is that of Leucine-rich repeat-containing protein 42 (lrrc42) from Danio rerio (Zebrafish).